A 571-amino-acid chain; its full sequence is Isocitrate dehydrogenase kinase/phosphatase (571 aa).

ATP contacts are provided by residues 318–324 and K339; that span reads APGVRGM. D374 is an active-site residue.

This sequence belongs to the AceK family.

The protein localises to the cytoplasm. The enzyme catalyses L-seryl-[isocitrate dehydrogenase] + ATP = O-phospho-L-seryl-[isocitrate dehydrogenase] + ADP + H(+). Bifunctional enzyme which can phosphorylate or dephosphorylate isocitrate dehydrogenase (IDH) on a specific serine residue. This is a regulatory mechanism which enables bacteria to bypass the Krebs cycle via the glyoxylate shunt in response to the source of carbon. When bacteria are grown on glucose, IDH is fully active and unphosphorylated, but when grown on acetate or ethanol, the activity of IDH declines drastically concomitant with its phosphorylation. The chain is Isocitrate dehydrogenase kinase/phosphatase from Pseudomonas putida (strain ATCC 700007 / DSM 6899 / JCM 31910 / BCRC 17059 / LMG 24140 / F1).